The following is an 878-amino-acid chain: Indoleacetate decarboxylase (878 aa).

The PFL domain occupies 42–750 (DRTKRMKERF…VTGATPDGRL (709 aa)). Cys500 acts as the Cysteine radical intermediate in catalysis. Catalysis depends on Glu502, which acts as the Proton acceptor. The region spanning 758–878 (GILSASPGTD…VIARTEYDAL (121 aa)) is the Glycine radical domain. Gly853 is subject to Glycine radical.

The protein belongs to the glycyl radical enzyme (GRE) family. As to quaternary structure, homodimer (predominantly) and monomer. Post-translationally, requires the activating protein OsIADAE to generate the key active site glycyl radical on Gly-853 that is involved in catalysis.

It catalyses the reaction (indol-3-yl)acetate + H(+) = skatole + CO2. It functions in the pathway amino-acid degradation. Its function is as follows. Glycyl radical enzyme that catalyzes the terminal step of tryptophan fermentation, the decarboxylation of indoleacetate to form skatole, a malodorous compound that contributes to the characteristic smell of animal feces. No activity is detected with phenylacetate or p-hydroxyphenylacetate as substrates, indicating high substrate specificity. This Tractidigestivibacter scatoligenes (Olsenella scatoligenes) protein is Indoleacetate decarboxylase.